The primary structure comprises 462 residues: ATP synthase subunit beta (462 aa).

151–158 (GGAGVGKT) contacts ATP.

Belongs to the ATPase alpha/beta chains family. In terms of assembly, F-type ATPases have 2 components, CF(1) - the catalytic core - and CF(0) - the membrane proton channel. CF(1) has five subunits: alpha(3), beta(3), gamma(1), delta(1), epsilon(1). CF(0) has four main subunits: a(1), b(1), b'(1) and c(9-12).

It localises to the cell inner membrane. It carries out the reaction ATP + H2O + 4 H(+)(in) = ADP + phosphate + 5 H(+)(out). In terms of biological role, produces ATP from ADP in the presence of a proton gradient across the membrane. The catalytic sites are hosted primarily by the beta subunits. This is ATP synthase subunit beta from Chlorobium chlorochromatii (strain CaD3).